A 354-amino-acid chain; its full sequence is Histidinol-phosphate aminotransferase (354 aa).

Lys210 carries the post-translational modification N6-(pyridoxal phosphate)lysine.

Belongs to the class-II pyridoxal-phosphate-dependent aminotransferase family. Histidinol-phosphate aminotransferase subfamily. As to quaternary structure, homodimer. Requires pyridoxal 5'-phosphate as cofactor.

The catalysed reaction is L-histidinol phosphate + 2-oxoglutarate = 3-(imidazol-4-yl)-2-oxopropyl phosphate + L-glutamate. Its pathway is amino-acid biosynthesis; L-histidine biosynthesis; L-histidine from 5-phospho-alpha-D-ribose 1-diphosphate: step 7/9. This is Histidinol-phosphate aminotransferase from Clostridium botulinum (strain Langeland / NCTC 10281 / Type F).